Consider the following 125-residue polypeptide: Histone H2B type 1 (125 aa).

Residues 1 to 36 are disordered; that stretch reads MPEPAKSRPAPKKGSKKAVTKAQKKDGKERKRSRKE. An N-acetylproline modification is found at P2. E3 is modified (ADP-ribosyl glutamic acid). K6 is subject to N6-(2-hydroxyisobutyryl)lysine; alternate. K6 bears the N6-(beta-hydroxybutyryl)lysine; alternate mark. K6 is modified (N6-acetyllysine; alternate). An N6-butyryllysine; alternate modification is found at K6. Residue K6 is modified to N6-crotonyllysine; alternate. K6 is subject to N6-lactoyllysine; alternate. A Glycyl lysine isopeptide (Lys-Gly) (interchain with G-Cter in SUMO2); alternate cross-link involves residue K6. S7 is modified (ADP-ribosylserine). The segment covering 9–19 has biased composition (basic residues); sequence PAPKKGSKKAV. K12 is modified (N6-(beta-hydroxybutyryl)lysine; alternate). Residues K12 and K13 each carry the N6-acetyllysine; alternate modification. Residues K12 and K13 each carry the N6-crotonyllysine; alternate modification. Residue K12 is modified to N6-lactoyllysine; alternate. Position 13 is an N6-(2-hydroxyisobutyryl)lysine; alternate (K13). At S15 the chain carries Phosphoserine; by STK4/MST1. N6-acetyllysine; alternate is present on residues K16, K17, K21, and K24. Residues K16, K17, K21, and K24 each carry the N6-crotonyllysine; alternate modification. Residues K16, K17, K21, and K24 each carry the N6-lactoyllysine; alternate modification. Residue K17 is modified to N6-glutaryllysine; alternate. An N6-(2-hydroxyisobutyryl)lysine; alternate mark is found at K21 and K24. N6-(beta-hydroxybutyryl)lysine; alternate is present on K21. Residue K21 is modified to N6-butyryllysine; alternate. Residue K21 forms a Glycyl lysine isopeptide (Lys-Gly) (interchain with G-Cter in SUMO2); alternate linkage. At K25 the chain carries N6-(2-hydroxyisobutyryl)lysine. K35 is subject to N6-(2-hydroxyisobutyryl)lysine; alternate. The residue at position 35 (K35) is an N6-(beta-hydroxybutyryl)lysine; alternate. K35 bears the N6-crotonyllysine; alternate mark. At K35 the chain carries N6-glutaryllysine; alternate. An N6-succinyllysine; alternate modification is found at K35. A Glycyl lysine isopeptide (Lys-Gly) (interchain with G-Cter in ubiquitin); alternate cross-link involves residue K35. E36 carries the post-translational modification PolyADP-ribosyl glutamic acid. Position 37 is a phosphoserine; by AMPK (S37). An N6-(2-hydroxyisobutyryl)lysine; alternate mark is found at K44, K47, and K58. The residue at position 44 (K44) is an N6-lactoyllysine; alternate. 2 positions are modified to N6-glutaryllysine; alternate: K44 and K47. At K47 the chain carries N6-methyllysine; alternate. Position 58 is an N6,N6-dimethyllysine; alternate (K58). R79 is modified (dimethylated arginine). An N6-(2-hydroxyisobutyryl)lysine; alternate modification is found at K85. N6-acetyllysine; alternate is present on K85. An N6-lactoyllysine; alternate modification is found at K85. At K85 the chain carries N6,N6,N6-trimethyllysine; alternate. Omega-N-methylarginine is present on residues R86 and R92. K108 is subject to N6-(2-hydroxyisobutyryl)lysine; alternate. N6-lactoyllysine; alternate is present on K108. K108 carries the post-translational modification N6-glutaryllysine; alternate. Residue K108 is modified to N6-methyllysine; alternate. An O-linked (GlcNAc) serine glycan is attached at S112. T115 is subject to Phosphothreonine. N6-(2-hydroxyisobutyryl)lysine; alternate occurs at positions 116 and 120. K116 carries the N6-(beta-hydroxybutyryl)lysine; alternate modification. 2 positions are modified to N6-lactoyllysine; alternate: K116 and K120. N6-glutaryllysine; alternate occurs at positions 116 and 120. 2 positions are modified to N6-succinyllysine; alternate: K116 and K120. The residue at position 116 (K116) is an N6-methylated lysine; alternate. Residue K120 forms a Glycyl lysine isopeptide (Lys-Gly) (interchain with G-Cter in ubiquitin); alternate linkage.

It belongs to the histone H2B family. The nucleosome is a histone octamer containing two molecules each of H2A, H2B, H3 and H4 assembled in one H3-H4 heterotetramer and two H2A-H2B heterodimers. The octamer wraps approximately 147 bp of DNA. Post-translationally, monoubiquitination at Lys-35 (H2BK34Ub) by the MSL1/MSL2 dimer is required for histone H3 'Lys-4' (H3K4me) and 'Lys-79' (H3K79me) methylation and transcription activation at specific gene loci, such as HOXA9 and MEIS1 loci. Similarly, monoubiquitination at Lys-120 (H2BK120Ub) by the RNF20/40 complex gives a specific tag for epigenetic transcriptional activation and is also prerequisite for histone H3 'Lys-4' and 'Lys-79' methylation. It also functions cooperatively with the FACT dimer to stimulate elongation by RNA polymerase II. H2BK120Ub also acts as a regulator of mRNA splicing: deubiquitination by USP49 is required for efficient cotranscriptional splicing of a large set of exons. Phosphorylated on Ser-15 (H2BS14ph) by STK4/MST1 during apoptosis; which facilitates apoptotic chromatin condensation. Also phosphorylated on Ser-15 in response to DNA double strand breaks (DSBs), and in correlation with somatic hypermutation and immunoglobulin class-switch recombination. Phosphorylation at Ser-37 (H2BS36ph) by AMPK in response to stress promotes transcription. In terms of processing, ADP-ribosylated by PARP1 or PARP2 on Ser-7 (H2BS6ADPr) in response to DNA damage. H2BS6ADPr promotes recruitment of CHD1L. Mono-ADP-ribosylated on Glu-3 (H2BE2ADPr) by PARP3 in response to single-strand breaks. Poly ADP-ribosylation on Glu-36 (H2BE35ADPr) by PARP1 regulates adipogenesis: it inhibits phosphorylation at Ser-37 (H2BS36ph), thereby blocking expression of pro-adipogenetic genes. Post-translationally, crotonylation (Kcr) is specifically present in male germ cells and marks testis-specific genes in post-meiotic cells, including X-linked genes that escape sex chromosome inactivation in haploid cells. Crotonylation marks active promoters and enhancers and confers resistance to transcriptional repressors. It is also associated with post-meiotically activated genes on autosomes. GlcNAcylation at Ser-112 promotes monoubiquitination of Lys-120. It fluctuates in response to extracellular glucose, and associates with transcribed genes. In terms of processing, lactylated in macrophages by EP300/P300 by using lactoyl-CoA directly derived from endogenous or exogenous lactate, leading to stimulates gene transcription.

It localises to the nucleus. Its subcellular location is the chromosome. Its function is as follows. Core component of nucleosome. Nucleosomes wrap and compact DNA into chromatin, limiting DNA accessibility to the cellular machineries which require DNA as a template. Histones thereby play a central role in transcription regulation, DNA repair, DNA replication and chromosomal stability. DNA accessibility is regulated via a complex set of post-translational modifications of histones, also called histone code, and nucleosome remodeling. Has broad antibacterial activity. May contribute to the formation of the functional antimicrobial barrier of the colonic epithelium, and to the bactericidal activity of amniotic fluid. In Rattus norvegicus (Rat), this protein is Histone H2B type 1.